The primary structure comprises 529 residues: ATP synthase F(1) complex catalytic subunit beta, mitochondrial (529 aa).

The N-terminal 46 residues, 1–46 (MLSLVGRVASASASGALRGLNPLAALPQAHLLLRTAPAGVHPARDY), are a transit peptide targeting the mitochondrion. A glycan (O-linked (GlcNAc) serine) is linked at Ser106. Residues Lys124, Lys133, and Lys161 each carry the N6-acetyllysine; alternate modification. 3 positions are modified to N6-succinyllysine; alternate: Lys124, Lys133, and Lys161. Lys198 carries the post-translational modification N6-acetyllysine. ADP-binding residues include Gly209, Val210, Gly211, Lys212, Thr213, and Val214. Gly209 contacts ATP. Residues Gly209, Val210, Gly211, Lys212, and Thr213 each coordinate phosphate. Residues Gly211, Lys212, Thr213, and Val214 each coordinate ATP. Thr213 serves as a coordination point for Mg(2+). Glu238 provides a ligand contact to Mg(2+). Position 239 (Arg239) interacts with ATP. Lys259 and Lys264 each carry N6-acetyllysine; alternate. N6-succinyllysine; alternate occurs at positions 259 and 264. Thr312 is subject to Phosphothreonine. Ser415 carries the phosphoserine modification. Residue Lys426 is modified to N6-acetyllysine. Position 433 is a phosphoserine (Ser433). N6-acetyllysine is present on residues Lys480 and Lys485. Residue Lys522 is modified to N6-acetyllysine; alternate. Position 522 is an N6-succinyllysine; alternate (Lys522). Residue Ser529 is modified to Phosphoserine.

Belongs to the ATPase alpha/beta chains family. Homotrimer. Component of the ATP synthase complex composed at least of ATP5F1A/subunit alpha, ATP5F1B/subunit beta, ATP5MC1/subunit c (homooctomer), MT-ATP6/subunit a, MT-ATP8/subunit 8, ATP5ME/subunit e, ATP5MF/subunit f, ATP5MG/subunit g, ATP5MK/subunit k, ATP5MJ/subunit j, ATP5F1C/subunit gamma, ATP5F1D/subunit delta, ATP5F1E/subunit epsilon, ATP5PF/subunit F6, ATP5PB/subunit b, ATP5PD/subunit d, ATP5PO/subunit OSCP. ATP synthase complex consists of a soluble F(1) head domain (subunits alpha(3) and beta(3)) - the catalytic core - and a membrane F(0) domain - the membrane proton channel (subunits c, a, 8, e, f, g, k and j). These two domains are linked by a central stalk (subunits gamma, delta, and epsilon) rotating inside the F1 region and a stationary peripheral stalk (subunits F6, b, d, and OSCP). Interacts with PPIF. Interacts with BCL2L1 isoform BCL-X(L); the interaction mediates the association of BCL2L1 isoform BCL-X(L) with the mitochondrial membrane F(1)F(0) ATP synthase and enhances neurons metabolic efficiency. Interacts with CLN5 and PPT1. Interacts with S100A1; this interaction increases F1-ATPase activity. Interacts with MTLN. Interacts with TTC5/STRAP; the interaction results in decreased mitochondrial ATP production.

Its subcellular location is the mitochondrion inner membrane. It catalyses the reaction ATP + H2O + 4 H(+)(in) = ADP + phosphate + 5 H(+)(out). Functionally, catalytic subunit beta, of the soluble F(1) head domain within the mitochondrial ATP synthase complex (F(1)F(0) ATP synthase or complex V) that produces ATP from ADP and phosphate inorganique in the presence of a proton gradient across the membrane which is generated by electron transport complexes of the respiratory chain. With the non-catalytic subunit alpha (ATP5F1A), forms the catalytic core in the F(1) domain. ATP synthase complex consist of two structural domains, F(1) - containing the extramembraneous catalytic core, and F(0) - containing the membrane proton channel, linked together by a central stalk and a peripheral stalk. During catalysis, ATP synthesis in the catalytic domain of F(1) is coupled via a rotary mechanism of the central stalk subunits to proton translocation. Its function is as follows. Catalytic subunit beta, of the mitochondrial membrane ATP synthase complex (F(1)F(0) ATP synthase or Complex V) that produces ATP from ADP in the presence of a proton gradient across the membrane which is generated by electron transport complexes of the respiratory chain. ATP synthase complex consist of a soluble F(1) head domain - the catalytic core - and a membrane F(1) domain - the membrane proton channel. These two domains are linked by a central stalk rotating inside the F(1) region and a stationary peripheral stalk. During catalysis, ATP synthesis in the catalytic domain of F(1) is coupled via a rotary mechanism of the central stalk subunits to proton translocation. In vivo, can only synthesize ATP although its ATP hydrolase activity can be activated artificially in vitro. With the subunit alpha (ATP5F1A), forms the catalytic core in the F(1) domain. The protein is ATP synthase F(1) complex catalytic subunit beta, mitochondrial of Rattus norvegicus (Rat).